The sequence spans 205 residues: Thymidylate kinase (205 aa).

An ATP-binding site is contributed by 7-14 (GIDGSGKT).

Belongs to the thymidylate kinase family.

The catalysed reaction is dTMP + ATP = dTDP + ADP. Functionally, phosphorylation of dTMP to form dTDP in both de novo and salvage pathways of dTTP synthesis. This is Thymidylate kinase from Wolbachia sp. subsp. Brugia malayi (strain TRS).